We begin with the raw amino-acid sequence, 445 residues long: GTPase Der (445 aa).

2 EngA-type G domains span residues Pro3–Gln167 and Ile180–Met353. GTP contacts are provided by residues Gly9–Ser16, Asp56–Phe60, Asn119–Glu122, Gly186–Ser193, Asp233–Leu237, and Asn298–Asp301. In terms of domain architecture, KH-like spans Ala354–Asn438.

Belongs to the TRAFAC class TrmE-Era-EngA-EngB-Septin-like GTPase superfamily. EngA (Der) GTPase family. As to quaternary structure, associates with the 50S ribosomal subunit.

GTPase that plays an essential role in the late steps of ribosome biogenesis. The sequence is that of GTPase Der from Burkholderia ambifaria (strain ATCC BAA-244 / DSM 16087 / CCUG 44356 / LMG 19182 / AMMD) (Burkholderia cepacia (strain AMMD)).